The primary structure comprises 312 residues: GTP cyclohydrolase MptA (312 aa).

Belongs to the GTP cyclohydrolase IV family. In terms of assembly, homodimer. Requires Fe(2+) as cofactor.

The enzyme catalyses GTP + H2O = 7,8-dihydroneopterin 2',3'-cyclic phosphate + formate + diphosphate + H(+). It participates in cofactor biosynthesis; 5,6,7,8-tetrahydromethanopterin biosynthesis. Functionally, converts GTP to 7,8-dihydro-D-neopterin 2',3'-cyclic phosphate, the first intermediate in the biosynthesis of coenzyme methanopterin. The polypeptide is GTP cyclohydrolase MptA (Methanococcus vannielii (strain ATCC 35089 / DSM 1224 / JCM 13029 / OCM 148 / SB)).